An 819-amino-acid chain; its full sequence is USP6 N-terminal-like protein (819 aa).

Position 1 is an N-acetylmethionine (methionine 1). In terms of domain architecture, Rab-GAP TBC spans 100–292 (GIPLQLRGEV…RIWDIYIFEG (193 aa)). A compositionally biased stretch (basic and acidic residues) spans 355-367 (DLPEPGKEDEYPK). Disordered regions lie at residues 355-498 (DLPE…ERTT) and 513-678 (LPVA…SRPT). Serine 389, serine 394, and serine 398 each carry phosphoserine. Composition is skewed to basic and acidic residues over residues 399–414 (SRREDGSPRKNHEHSP) and 432–449 (KSVDEGSKNLKHEAESQR). The span at 464–476 (HAAANQNSNAISN) shows a compositional bias: low complexity. Basic and acidic residues-rich tracts occupy residues 477–489 (VRKEFMPKWRKPS) and 533–542 (KALDGGEGKR). A phosphoserine mark is found at serine 544 and serine 547. Residues 556–571 (ESEHGASAEEGPERTH) show a composition bias toward basic and acidic residues. 7 positions are modified to phosphoserine: serine 574, serine 631, serine 644, serine 648, serine 665, serine 669, and serine 704. Residues 642–655 (FVSTQISPRPQINP) are compositionally biased toward polar residues. At tyrosine 717 the chain carries Phosphotyrosine. The span at 788–802 (ASPPGYPYAGPSPSA) shows a compositional bias: low complexity. Positions 788–807 (ASPPGYPYAGPSPSAHHYRN) are disordered.

In terms of assembly, interacts with EPS8.

The protein resides in the golgi apparatus. The protein localises to the cytoplasmic vesicle. In terms of biological role, acts as a GTPase-activating protein for RAB5A and RAB43. Involved in receptor trafficking. In complex with EPS8 inhibits internalization of EGFR. Involved in retrograde transport from the endocytic pathway to the Golgi apparatus. Involved in the transport of Shiga toxin from early and recycling endosomes to the trans-Golgi network. Required for structural integrity of the Golgi complex. The polypeptide is USP6 N-terminal-like protein (Usp6nl) (Mus musculus (Mouse)).